Here is a 255-residue protein sequence, read N- to C-terminus: 5-oxoprolinase subunit A (255 aa).

It belongs to the LamB/PxpA family. As to quaternary structure, forms a complex composed of PxpA, PxpB and PxpC.

It carries out the reaction 5-oxo-L-proline + ATP + 2 H2O = L-glutamate + ADP + phosphate + H(+). Functionally, catalyzes the cleavage of 5-oxoproline to form L-glutamate coupled to the hydrolysis of ATP to ADP and inorganic phosphate. The sequence is that of 5-oxoprolinase subunit A from Pyrococcus horikoshii (strain ATCC 700860 / DSM 12428 / JCM 9974 / NBRC 100139 / OT-3).